Consider the following 443-residue polypeptide: Ribulose bisphosphate carboxylase large chain (443 aa).

Residues asparagine 89 and threonine 139 each contribute to the substrate site. Residue lysine 141 is the Proton acceptor of the active site. Lysine 143 serves as a coordination point for substrate. Positions 167, 169, and 170 each coordinate Mg(2+). Lysine 167 is subject to N6-carboxylysine. Histidine 260 (proton acceptor) is an active-site residue. Residues arginine 261, histidine 293, and serine 345 each contribute to the substrate site.

Belongs to the RuBisCO large chain family. Type I subfamily. Heterohexadecamer of 8 large chains and 8 small chains; disulfide-linked. The disulfide link is formed within the large subunit homodimers. Mg(2+) serves as cofactor. The disulfide bond which can form in the large chain dimeric partners within the hexadecamer appears to be associated with oxidative stress and protein turnover.

It localises to the plastid. The protein localises to the chloroplast. The enzyme catalyses 2 (2R)-3-phosphoglycerate + 2 H(+) = D-ribulose 1,5-bisphosphate + CO2 + H2O. It carries out the reaction D-ribulose 1,5-bisphosphate + O2 = 2-phosphoglycolate + (2R)-3-phosphoglycerate + 2 H(+). Functionally, ruBisCO catalyzes two reactions: the carboxylation of D-ribulose 1,5-bisphosphate, the primary event in carbon dioxide fixation, as well as the oxidative fragmentation of the pentose substrate in the photorespiration process. Both reactions occur simultaneously and in competition at the same active site. The protein is Ribulose bisphosphate carboxylase large chain of Callitriche heterophylla (Large water-starwort).